The chain runs to 372 residues: Ubiquitin carboxyl-terminal hydrolase 12 (372 aa).

The USP domain maps to 39 to 371; it reads FGLVNFGNTC…SGYILFYQSR (333 aa). The Nucleophile role is filled by C48. A disordered region spans residues 150-169; the sequence is NGRLANGSLDSQNHNSNAPP. Positions 157 to 166 are enriched in polar residues; it reads SLDSQNHNSN. The Zn(2+) site is built by C188, C191, C235, and C238. Residue H319 is the Proton acceptor of the active site.

The protein belongs to the peptidase C19 family. USP12/USP46 subfamily. As to quaternary structure, interacts with WDR48.

The catalysed reaction is Thiol-dependent hydrolysis of ester, thioester, amide, peptide and isopeptide bonds formed by the C-terminal Gly of ubiquitin (a 76-residue protein attached to proteins as an intracellular targeting signal).. Its function is as follows. Deubiquitinating enzyme. Has almost no deubiquitinating activity by itself and requires the interaction with wdr48 to have a high activity. The protein is Ubiquitin carboxyl-terminal hydrolase 12 (usp12) of Salmo salar (Atlantic salmon).